Consider the following 183-residue polypeptide: uncharacterized protein (183 aa).

The next 4 helical transmembrane spans lie at 13–35 (KALL…LTYS), 60–82 (LLIL…KLRF), 117–139 (FEPV…YAIF), and 149–171 (LLFY…LYLS).

The protein localises to the cell membrane. This is an uncharacterized protein from Archaeoglobus fulgidus (strain ATCC 49558 / DSM 4304 / JCM 9628 / NBRC 100126 / VC-16).